The chain runs to 125 residues: Histone H2A (125 aa).

A compositionally biased stretch (basic residues) spans 1–18; it reads MSGRGKGGKAKAKAKSRS. Residues 1 to 21 form a disordered region; the sequence is MSGRGKGGKAKAKAKSRSSRA. Ser2 carries the post-translational modification N-acetylserine. Gln104 carries the post-translational modification N5-methylglutamine.

The protein belongs to the histone H2A family. In terms of assembly, the nucleosome is a histone octamer containing two molecules each of H2A, H2B, H3 and H4 assembled in one H3-H4 heterotetramer and two H2A-H2B heterodimers. The octamer wraps approximately 147 bp of DNA.

It localises to the nucleus. The protein localises to the chromosome. Its function is as follows. Core component of nucleosome. Nucleosomes wrap and compact DNA into chromatin, limiting DNA accessibility to the cellular machineries which require DNA as a template. Histones thereby play a central role in transcription regulation, DNA repair, DNA replication and chromosomal stability. DNA accessibility is regulated via a complex set of post-translational modifications of histones, also called histone code, and nucleosome remodeling. This is Histone H2A from Mytilus californianus (California mussel).